The chain runs to 367 residues: Leu/Ile/Val-binding protein BraC3 (367 aa).

The N-terminal stretch at 1 to 22 (MTLKTLTATLVASLAFAPLAHA) is a signal peptide.

Belongs to the leucine-binding protein family. The complex is composed of two ATP-binding proteins (BraF and BraG), two transmembrane proteins (BraD and BraE) and a solute-binding protein (BraC or BraC3).

Its subcellular location is the periplasm. In terms of biological role, part of the ABC transporter complex BraDEFGC/C3 involved in transport of branched-chain amino acids Leu, Ile and Val (LIV). Essential for the development of bacteroids, the differentiated legume-symbiotic forms of this bacterium, and for the effective N(2) fixation by them. The protein is Leu/Ile/Val-binding protein BraC3 of Rhizobium johnstonii (strain DSM 114642 / LMG 32736 / 3841) (Rhizobium leguminosarum bv. viciae).